The sequence spans 1134 residues: Phytochrome 1 (1134 aa).

The 183-residue stretch at 219 to 401 folds into the GAF domain; sequence DIGLLCDTVV…VFGLQLNMEA (183 aa). Cys324 provides a ligand contact to phytochromobilin. The 72-residue stretch at 616–687 folds into the PAS 1 domain; it reads VANEMVRLIE…RLLYLALQGD (72 aa). Residues 690 to 746 enclose the PAC domain; sequence QNVELKLKTFGGQKDKEAVILVVNACASRDVSDNVVGVCFVGQDVTGQKVVMDKFTR. Positions 750–821 constitute a PAS 2 domain; it reads DYKAIVQNPN…KGQDAVTKFM (72 aa). One can recognise a Histidine kinase domain in the interval 901 to 1121; the sequence is YIRQEIKNPL…LVSLELPLAQ (221 aa).

The protein belongs to the phytochrome family. In terms of assembly, homodimer. Post-translationally, contains one covalently linked phytochromobilin chromophore.

Regulatory photoreceptor which exists in two forms that are reversibly interconvertible by light: the Pr form that absorbs maximally in the red region of the spectrum and the Pfr form that absorbs maximally in the far-red region. Photoconversion of Pr to Pfr induces an array of morphogenic responses, whereas reconversion of Pfr to Pr cancels the induction of those responses. Pfr controls the expression of a number of nuclear genes including those encoding the small subunit of ribulose-bisphosphate carboxylase, chlorophyll A/B binding protein, protochlorophyllide reductase, rRNA, etc. It also controls the expression of its own gene(s) in a negative feedback fashion. This Selaginella martensii (Martens's spike moss) protein is Phytochrome 1 (PHY1).